A 129-amino-acid polypeptide reads, in one-letter code: Protachykinin-1 (129 aa).

The first 19 residues, methionine 1–alanine 19, serve as a signal peptide directing secretion. A propeptide spanning residues glutamate 20–alanine 56 is cleaved from the precursor. Methionine amide is present on residues methionine 68 and methionine 107.

This sequence belongs to the tachykinin family. The substance P form is cleaved at Pro-59 by the prolyl endopeptidase FAP (seprase) activity (in vitro). Substance P is also cleaved and degraded by Angiotensin-converting enzyme (ACE) and neprilysin (MME).

The protein resides in the secreted. Its function is as follows. Tachykinins are active peptides which excite neurons, evoke behavioral responses, are potent vasodilators and secretagogues, and contract (directly or indirectly) many smooth muscles. This Homo sapiens (Human) protein is Protachykinin-1 (TAC1).